We begin with the raw amino-acid sequence, 117 residues long: Immunoglobulin kappa variable 1-9 (117 aa).

The N-terminal stretch at 1 to 22 is a signal peptide; sequence MDMRVPAQLLGLLLLWLPGARC. The tract at residues 23–45 is framework-1; the sequence is DIQLTQSPSFLSASVGDRVTITC. In terms of domain architecture, Ig-like spans 24-117; it reads IQLTQSPSFL…YYCQQLNSYP (94 aa). Residues Cys-45 and Cys-110 are joined by a disulfide bond. The complementarity-determining-1 stretch occupies residues 46-56; the sequence is RASQGISSYLA. Residues 57-71 form a framework-2 region; that stretch reads WYQQKPGKAPKLLIY. A complementarity-determining-2 region spans residues 72–78; that stretch reads AASTLQS. A framework-3 region spans residues 79 to 110; the sequence is GVPSRFSGSGSGTEFTLTISSLQPEDFATYYC. Residues 111-117 form a complementarity-determining-3 region; it reads QQLNSYP.

As to quaternary structure, immunoglobulins are composed of two identical heavy chains and two identical light chains; disulfide-linked.

It is found in the secreted. It localises to the cell membrane. In terms of biological role, v region of the variable domain of immunoglobulin light chains that participates in the antigen recognition. Immunoglobulins, also known as antibodies, are membrane-bound or secreted glycoproteins produced by B lymphocytes. In the recognition phase of humoral immunity, the membrane-bound immunoglobulins serve as receptors which, upon binding of a specific antigen, trigger the clonal expansion and differentiation of B lymphocytes into immunoglobulins-secreting plasma cells. Secreted immunoglobulins mediate the effector phase of humoral immunity, which results in the elimination of bound antigens. The antigen binding site is formed by the variable domain of one heavy chain, together with that of its associated light chain. Thus, each immunoglobulin has two antigen binding sites with remarkable affinity for a particular antigen. The variable domains are assembled by a process called V-(D)-J rearrangement and can then be subjected to somatic hypermutations which, after exposure to antigen and selection, allow affinity maturation for a particular antigen. The chain is Immunoglobulin kappa variable 1-9 from Homo sapiens (Human).